Consider the following 434-residue polypeptide: UDP-N-acetylmuramate--L-alanine ligase (434 aa).

108 to 114 (GSHGKTT) contacts ATP.

Belongs to the MurCDEF family.

The protein resides in the cytoplasm. It catalyses the reaction UDP-N-acetyl-alpha-D-muramate + L-alanine + ATP = UDP-N-acetyl-alpha-D-muramoyl-L-alanine + ADP + phosphate + H(+). The protein operates within cell wall biogenesis; peptidoglycan biosynthesis. Cell wall formation. The chain is UDP-N-acetylmuramate--L-alanine ligase from Geobacillus kaustophilus (strain HTA426).